The sequence spans 726 residues: Kinesin-like protein KIN-10B (726 aa).

3 disordered regions span residues 1 to 20 (MEQQQKQEPGGGGGGVRVVA), 60 to 82 (AATAAASGRGDGPKDKQQQQQQK), and 402 to 423 (KNARPGFNNSGVKGGQTPTANR). One can recognise a Kinesin motor domain in the interval 15–359 (GVRVVARICP…LALASRSSQV (345 aa)). The segment covering 408-423 (FNNSGVKGGQTPTANR) has biased composition (polar residues).

This sequence belongs to the TRAFAC class myosin-kinesin ATPase superfamily. Kinesin family. KIN-10 subfamily.

This Oryza sativa subsp. japonica (Rice) protein is Kinesin-like protein KIN-10B.